Here is a 31-residue protein sequence, read N- to C-terminus: Photosystem II reaction center protein M (31 aa).

A helical membrane pass occupies residues I5–L25.

It belongs to the PsbM family. As to quaternary structure, PSII is composed of 1 copy each of membrane proteins PsbA, PsbB, PsbC, PsbD, PsbE, PsbF, PsbH, PsbI, PsbJ, PsbK, PsbL, PsbM, PsbT, PsbX, PsbY, PsbZ, Psb30/Ycf12, at least 3 peripheral proteins of the oxygen-evolving complex and a large number of cofactors. It forms dimeric complexes.

It localises to the plastid. The protein localises to the chloroplast thylakoid membrane. Its function is as follows. One of the components of the core complex of photosystem II (PSII). PSII is a light-driven water:plastoquinone oxidoreductase that uses light energy to abstract electrons from H(2)O, generating O(2) and a proton gradient subsequently used for ATP formation. It consists of a core antenna complex that captures photons, and an electron transfer chain that converts photonic excitation into a charge separation. This subunit is found at the monomer-monomer interface. This chain is Photosystem II reaction center protein M, found in Mesostigma viride (Green alga).